Consider the following 379-residue polypeptide: Cytochrome b (379 aa).

4 helical membrane passes run F33–M53, W77–V98, W113–L133, and F178–L198. H83 and H97 together coordinate heme b. Residues H182 and H196 each coordinate heme b. Residue H201 participates in a ubiquinone binding. Transmembrane regions (helical) follow at residues T226–Y246, P288–Q308, L320–G340, and F347–P367.

It belongs to the cytochrome b family. The cytochrome bc1 complex contains 11 subunits: 3 respiratory subunits (MT-CYB, CYC1 and UQCRFS1), 2 core proteins (UQCRC1 and UQCRC2) and 6 low-molecular weight proteins (UQCRH/QCR6, UQCRB/QCR7, UQCRQ/QCR8, UQCR10/QCR9, UQCR11/QCR10 and a cleavage product of UQCRFS1). This cytochrome bc1 complex then forms a dimer. Heme b is required as a cofactor.

Its subcellular location is the mitochondrion inner membrane. Its function is as follows. Component of the ubiquinol-cytochrome c reductase complex (complex III or cytochrome b-c1 complex) that is part of the mitochondrial respiratory chain. The b-c1 complex mediates electron transfer from ubiquinol to cytochrome c. Contributes to the generation of a proton gradient across the mitochondrial membrane that is then used for ATP synthesis. The protein is Cytochrome b (MT-CYB) of Lepilemur ruficaudatus (Red-tailed sportive lemur).